The chain runs to 411 residues: Glutamyl-tRNA reductase (411 aa).

Substrate-binding positions include 49-52, serine 99, 104-106, and glutamine 110; these read TCNR and ENE. Cysteine 50 (nucleophile) is an active-site residue. 179 to 184 contributes to the NADP(+) binding site; sequence GAGEAG.

This sequence belongs to the glutamyl-tRNA reductase family. As to quaternary structure, homodimer.

The enzyme catalyses (S)-4-amino-5-oxopentanoate + tRNA(Glu) + NADP(+) = L-glutamyl-tRNA(Glu) + NADPH + H(+). The protein operates within porphyrin-containing compound metabolism; protoporphyrin-IX biosynthesis; 5-aminolevulinate from L-glutamyl-tRNA(Glu): step 1/2. Its function is as follows. Catalyzes the NADPH-dependent reduction of glutamyl-tRNA(Glu) to glutamate 1-semialdehyde (GSA). This Hyperthermus butylicus (strain DSM 5456 / JCM 9403 / PLM1-5) protein is Glutamyl-tRNA reductase.